A 417-amino-acid chain; its full sequence is Peptidyl-Asp metalloendopeptidase (417 aa).

An N-terminal signal peptide occupies residues 1–23 (MKSKSMCTTVGLIAMCLAGSAAA). Residue His-331 participates in Zn(2+) binding. Glu-332 is an active-site residue. His-335 and His-341 together coordinate Zn(2+).

The protein belongs to the peptidase M72 family. Zn(2+) serves as cofactor.

It carries out the reaction Cleavage of Xaa-|-Asp, Xaa-|-Glu and Xaa-|-cysteic acid bonds.. In terms of biological role, metalloprotease, specifically cleaves on the N-terminal side of aspartyl, glutamyl and cysteic acid residues. The chain is Peptidyl-Asp metalloendopeptidase from Xanthomonas campestris pv. campestris (strain ATCC 33913 / DSM 3586 / NCPPB 528 / LMG 568 / P 25).